The sequence spans 257 residues: UPF0758 protein Bcenmc03_2526 (257 aa).

Residues 1–53 (MLSPCPILPSAECRDTADTPADPPGRVIPINRRRRRPGDWRPERPRERLLERG) are disordered. Residues 37–51 (PGDWRPERPRERLLE) show a composition bias toward basic and acidic residues. Residues 135-257 (QIDSPGAVED…TFSFARAGWL (123 aa)) enclose the MPN domain. 3 residues coordinate Zn(2+): His206, His208, and Asp219. A JAMM motif motif is present at residues 206 to 219 (HNHPSGAVQPSAED).

This sequence belongs to the UPF0758 family.

The protein is UPF0758 protein Bcenmc03_2526 of Burkholderia orbicola (strain MC0-3).